The chain runs to 362 residues: D-alanine--D-alanine ligase (362 aa).

Positions Lys134–Arg345 constitute an ATP-grasp domain. Gly170–Glu225 serves as a coordination point for ATP. Residues Asp298, Glu312, and Asn314 each coordinate Mg(2+).

It belongs to the D-alanine--D-alanine ligase family. Requires Mg(2+) as cofactor. It depends on Mn(2+) as a cofactor.

It is found in the cytoplasm. The catalysed reaction is 2 D-alanine + ATP = D-alanyl-D-alanine + ADP + phosphate + H(+). It participates in cell wall biogenesis; peptidoglycan biosynthesis. Functionally, cell wall formation. The polypeptide is D-alanine--D-alanine ligase (Lactobacillus delbrueckii subsp. bulgaricus (strain ATCC BAA-365 / Lb-18)).